A 166-amino-acid chain; its full sequence is Small ribosomal subunit protein uS5 (166 aa).

The 64-residue stretch at 12–75 (YIEKLVQVNR…EAARRNMIQV (64 aa)) folds into the S5 DRBM domain.

This sequence belongs to the universal ribosomal protein uS5 family. In terms of assembly, part of the 30S ribosomal subunit. Contacts proteins S4 and S8.

With S4 and S12 plays an important role in translational accuracy. In terms of biological role, located at the back of the 30S subunit body where it stabilizes the conformation of the head with respect to the body. This chain is Small ribosomal subunit protein uS5, found in Pseudomonas entomophila (strain L48).